The sequence spans 461 residues: Probable protein phosphatase 2C 40 (461 aa).

The segment at arginine 34–glycine 63 is disordered. Residues arginine 57–isoleucine 321 form the PPM-type phosphatase domain. Aspartate 98, glycine 99, aspartate 273, and aspartate 312 together coordinate Mn(2+). A compositionally biased stretch (basic and acidic residues) spans lysine 439 to serine 453. The interval lysine 439–glutamate 461 is disordered.

It belongs to the PP2C family. The cofactor is Mg(2+). Mn(2+) is required as a cofactor. As to expression, expressed in leaves, leaf sheaths, panicles, nodes and internodes. Expressed at low levels in roots and stems.

It is found in the nucleus. It localises to the cytoplasm. It catalyses the reaction O-phospho-L-seryl-[protein] + H2O = L-seryl-[protein] + phosphate. The enzyme catalyses O-phospho-L-threonyl-[protein] + H2O = L-threonyl-[protein] + phosphate. Functionally, mediates the negative regulation of osmotic and salt stress tolerance through regulation of the jasmonate and abscisic acid signaling pathways and modulation of the raffinose family oligosaccharide metabolism pathway. This is Probable protein phosphatase 2C 40 from Oryza sativa subsp. japonica (Rice).